We begin with the raw amino-acid sequence, 429 residues long: MTAGRVNPYSIVSSEEDGLRLTTMPGINGFGNGKIHTRRKCRNRFVKKNGQCNVEFTNMDDKPQRYIADMFTTCVDIRWRYMLLLFSLAFLVSWLLFGLIFWLIALIHGDLENPGGDDTFKPCVLQVNGFVAAFLFSIETQTTIGYGFRCVTEECPLAVFMVVVQSIVGCIIDSFMIGAIMAKMARPKKRAQTLLFSHNAVVAMRDGKLCLMWRVGNLRKSHIVEAHVRAQLIKPRITEEGEYIPLDQIDIDVGFDKGLDRIFLVSPITILHEINEDSPLFGISRQDLETDDFEIVVILEGMVEATAMTTQARSSYLASEILWGHRFEPVLFEEKNQYKVDYSHFHKTYEVPSTPRCSAKDLVENKFLLPSTNSFCYENELAFMSRDEDEEDDDSRGLDDLSPDNRHEFDRLQATIALDQRSYRRESEI.

The Cytoplasmic segment spans residues 1-76 (MTAGRVNPYS…IADMFTTCVD (76 aa)). Residues 77–103 (IRWRYMLLLFSLAFLVSWLLFGLIFWL) form a helical membrane-spanning segment. Positions 78 and 80 each coordinate a 1,2-diacyl-sn-glycero-3-phospho-(1D-myo-inositol-4,5-bisphosphate). Residues 104 to 129 (IALIHGDLENPGGDDTFKPCVLQVNG) lie on the Extracellular side of the membrane. Cys123 and Cys155 are oxidised to a cystine. The helical; Pore-forming intramembrane region spans 130 to 146 (FVAAFLFSIETQTTIGY). Residues Thr143, Ile144, Gly145, and Tyr146 each contribute to the K(+) site. The Selectivity filter motif lies at 143–148 (TIGYGF). Topologically, residues 147-155 (GFRCVTEEC) are extracellular. The helical transmembrane segment at 156–183 (PLAVFMVVVQSIVGCIIDSFMIGAIMAK) threads the bilayer. A 1,2-diacyl-sn-glycero-3-phospho-(1D-myo-inositol-4,5-bisphosphate)-binding residues include Lys183 and Lys188. Topologically, residues 184-429 (MARPKKRAQT…QRSYRRESEI (246 aa)) are cytoplasmic. The segment at 386–407 (RDEDEEDDDSRGLDDLSPDNRH) is disordered. The span at 395 to 407 (SRGLDDLSPDNRH) shows a compositional bias: basic and acidic residues.

This sequence belongs to the inward rectifier-type potassium channel family. Homotetramer.

The protein localises to the membrane. It localises to the cell membrane. The protein resides in the sarcolemma. Its subcellular location is the T-tubule. It catalyses the reaction K(+)(in) = K(+)(out). Activated by phosphatidylinositol 4,5-bisphosphate (PtdIns(4,5)P2). PtdIns(4,5)P2 binding to the cytoplasmic side of the channel triggers a conformation change leading to channel opening. Its function is as follows. Inward rectifying potassium channel that probably participates in controlling the resting membrane potential in electrically excitable cells. Probably participates in establishing action potential waveform and excitability of neuronal and muscle tissues. Inward rectifier potassium channels are characterized by a greater tendency to allow potassium to flow into the cell rather than out of it. Their voltage dependence is regulated by the concentration of extracellular potassium; as external potassium is raised, the voltage range of the channel opening shifts to more positive voltages. The inward rectification is mainly due to the blockage of outward current by internal magnesium. This chain is ATP-sensitive inward rectifier potassium channel 12 (KCNJ12), found in Gallus gallus (Chicken).